The following is a 682-amino-acid chain: Potassium-transporting ATPase ATP-binding subunit (682 aa).

The next 4 membrane-spanning stretches (helical) occupy residues P34 to A54, A62 to A82, I219 to L239, and V254 to I274. D307 functions as the 4-aspartylphosphate intermediate in the catalytic mechanism. Residues D344, E348, F377 to S384, and K395 contribute to the ATP site. Positions 518 and 522 each coordinate Mg(2+). 3 consecutive transmembrane segments (helical) span residues F588–M608, A616–L636, and I656–L676.

The protein belongs to the cation transport ATPase (P-type) (TC 3.A.3) family. Type IA subfamily. The system is composed of three essential subunits: KdpA, KdpB and KdpC.

Its subcellular location is the cell inner membrane. The enzyme catalyses K(+)(out) + ATP + H2O = K(+)(in) + ADP + phosphate + H(+). Part of the high-affinity ATP-driven potassium transport (or Kdp) system, which catalyzes the hydrolysis of ATP coupled with the electrogenic transport of potassium into the cytoplasm. This subunit is responsible for energy coupling to the transport system and for the release of the potassium ions to the cytoplasm. This chain is Potassium-transporting ATPase ATP-binding subunit, found in Escherichia coli O6:K15:H31 (strain 536 / UPEC).